Consider the following 320-residue polypeptide: Putative protein FRMPD2-like (320 aa).

2 consecutive PDZ domains span residues 1-46 (MTSI…ERRV) and 90-178 (EVKL…CRPP). The disordered stretch occupies residues 215–239 (DQEDSWRDSASPDAGEGLGLRPESS).

In Homo sapiens (Human), this protein is Putative protein FRMPD2-like.